A 784-amino-acid chain; its full sequence is Lon protease (784 aa).

Residues 11–204 (IPVLPLRDVV…YLMAMMESEI (194 aa)) enclose the Lon N-terminal domain. Position 356–363 (356–363 (GPPGVGKT)) interacts with ATP. A Lon proteolytic domain is found at 592–773 (ENRVGQVTGL…EEVLALALQN (182 aa)). Catalysis depends on residues Ser-679 and Lys-722.

Belongs to the peptidase S16 family. In terms of assembly, homohexamer. Organized in a ring with a central cavity.

The protein resides in the cytoplasm. The enzyme catalyses Hydrolysis of proteins in presence of ATP.. Its function is as follows. ATP-dependent serine protease that mediates the selective degradation of mutant and abnormal proteins as well as certain short-lived regulatory proteins. Required for cellular homeostasis and for survival from DNA damage and developmental changes induced by stress. Degrades polypeptides processively to yield small peptide fragments that are 5 to 10 amino acids long. Binds to DNA in a double-stranded, site-specific manner. This chain is Lon protease, found in Erwinia amylovora (Fire blight bacteria).